The chain runs to 145 residues: Putative pre-16S rRNA nuclease (145 aa).

This sequence belongs to the YqgF nuclease family.

The protein resides in the cytoplasm. Its function is as follows. Could be a nuclease involved in processing of the 5'-end of pre-16S rRNA. The sequence is that of Putative pre-16S rRNA nuclease from Tropheryma whipplei (strain Twist) (Whipple's bacillus).